The sequence spans 524 residues: M-phase inducer phosphatase 1 (524 aa).

The Phosphodegron signature appears at 74-84; the sequence is MGSSESTDSGF. S76 carries the phosphoserine; by CHEK1 modification. S79, S82, and S88 each carry phosphoserine; by NEK11. Position 107 is a phosphoserine (S107). S124 carries the phosphoserine; by CHEK1 and CHEK2 modification. Positions 141 to 143 match the KEN box motif; it reads KEN. S178 carries the post-translational modification Phosphoserine; by CHEK1. Residues 264–317 are disordered; the sequence is LCSSSTRSVLKRPERSQEESPPGSTKRRKSMSGASPKESTNPEKAHETLHQSLS. Residues S279 and S293 each carry the phosphoserine; by CHEK1 and CHEK2 modification. A compositionally biased stretch (basic and acidic residues) spans 303 to 312; sequence TNPEKAHETL. Phosphoserine is present on S321. The Rhodanese domain occupies 376–482; the sequence is LIKEFVIIDC…FFMKCQSYCE (107 aa). C431 is an active-site residue. At T507 the chain carries Phosphothreonine; by CHEK1. S513 and S519 each carry phosphoserine; by PLK3.

It belongs to the MPI phosphatase family. Interacts with CCNB1/cyclin B1. Interacts with YWHAE/14-3-3 epsilon when phosphorylated. Interacts with CUL1 specifically when CUL1 is neddylated and active. Interacts with BTRC/BTRCP1 and FBXW11/BTRCP2. Interactions with CUL1, BTRC and FBXW11 are enhanced upon DNA damage. Interacts with CHEK2; mediates CDC25A phosphorylation and degradation in response to infrared-induced DNA damages. Interacts with HSP90AB1; prevents heat shock-mediated CDC25A degradation and contributes to cell cycle progression. Phosphorylated by CHEK1 on Ser-76, Ser-124, Ser-178, Ser-279, Ser-293 and Thr-507 during checkpoint mediated cell cycle arrest. Also phosphorylated by CHEK2 on Ser-124, Ser-279, and Ser-293 during checkpoint mediated cell cycle arrest. Phosphorylation on Ser-178 and Thr-507 creates binding sites for YWHAE/14-3-3 epsilon which inhibits CDC25A. Phosphorylation on Ser-76, Ser-124, Ser-178, Ser-279 and Ser-293 may also promote ubiquitin-dependent proteolysis of CDC25A by the SCF complex. Phosphorylation of CDC25A at Ser-76 by CHEK1 primes it for subsequent phosphorylation at Ser-79, Ser-82 and Ser-88 by NEK11. Phosphorylation by NEK11 is required for BTRC-mediated polyubiquitination and degradation. Phosphorylation by PIM1 leads to an increase in phosphatase activity. Phosphorylated by PLK3 following DNA damage, leading to promote its ubiquitination and degradation. Post-translationally, ubiquitinated by the anaphase promoting complex/cyclosome (APC/C) ubiquitin ligase complex that contains FZR1/CDH1 during G1 phase leading to its degradation by the proteasome. Ubiquitinated by a SCF complex containing BTRC and FBXW11 during S phase leading to its degradation by the proteasome. Deubiquitination by USP17L2/DUB3 leads to its stabilization.

It carries out the reaction O-phospho-L-tyrosyl-[protein] + H2O = L-tyrosyl-[protein] + phosphate. Its activity is regulated as follows. Stimulated by B-type cyclins. Stimulated by PIM1-mediated phosphorylation. Tyrosine protein phosphatase which functions as a dosage-dependent inducer of mitotic progression. Directly dephosphorylates CDK1 and stimulates its kinase activity. Also dephosphorylates CDK2 in complex with cyclin-E, in vitro. This Homo sapiens (Human) protein is M-phase inducer phosphatase 1 (CDC25A).